The following is a 952-amino-acid chain: Leucine--tRNA ligase (952 aa).

A 'HIGH' region motif is present at residues 66–77 (PYPSGAGLHVGH). The 'KMSKS' region motif lies at 722–726 (KMGKS). Residue lysine 725 coordinates ATP.

The protein belongs to the class-I aminoacyl-tRNA synthetase family.

The protein localises to the cytoplasm. The enzyme catalyses tRNA(Leu) + L-leucine + ATP = L-leucyl-tRNA(Leu) + AMP + diphosphate. The polypeptide is Leucine--tRNA ligase (Corynebacterium glutamicum (strain ATCC 13032 / DSM 20300 / JCM 1318 / BCRC 11384 / CCUG 27702 / LMG 3730 / NBRC 12168 / NCIMB 10025 / NRRL B-2784 / 534)).